The sequence spans 183 residues: Disulfide bond formation protein B 2 (183 aa).

Residues 1–9 lie on the Cytoplasmic side of the membrane; that stretch reads MSLACSRSL. Residues 10 to 26 traverse the membrane as a helical segment; the sequence is FFMAFTAGILALGASYY. The Periplasmic segment spans residues 27–44; sequence LEYAVGLVPCSLCLVQRL. Cys36 and Cys39 are joined by a disulfide. A helical transmembrane segment spans residues 45 to 61; that stretch reads FMSVLTLCCGLAAVHGP. The Cytoplasmic portion of the chain corresponds to 62–68; it reads QRVGLSL. A helical membrane pass occupies residues 69–85; that stretch reads YWMVTLLSSLGGTTAAW. Over 86-142 the chain is Periplasmic; it reads RQVLFQSDSLQELAHCAPNPEEMFSSLPWLCALMRMFNDTADCAELSWTLFDLSIPE. Cys101 and Cys128 are oxidised to a cystine. Residues 143-161 form a helical membrane-spanning segment; the sequence is WSLLFFVGMSILAVYQLLR. Residues 162–183 are Cytoplasmic-facing; that stretch reads QVWMALQRPLSGQPSHPALVRD.

It belongs to the DsbB family.

It localises to the cell inner membrane. Its function is as follows. Required for disulfide bond formation in some periplasmic proteins. Acts by oxidizing the DsbA protein. This is Disulfide bond formation protein B 2 from Pseudomonas fluorescens (strain Pf0-1).